The following is a 94-amino-acid chain: Phosphoribosyl-ATP pyrophosphatase (94 aa).

This sequence belongs to the PRA-PH family.

The protein localises to the cytoplasm. It catalyses the reaction 1-(5-phospho-beta-D-ribosyl)-ATP + H2O = 1-(5-phospho-beta-D-ribosyl)-5'-AMP + diphosphate + H(+). It functions in the pathway amino-acid biosynthesis; L-histidine biosynthesis; L-histidine from 5-phospho-alpha-D-ribose 1-diphosphate: step 2/9. The chain is Phosphoribosyl-ATP pyrophosphatase from Saccharolobus islandicus (strain Y.N.15.51 / Yellowstone #2) (Sulfolobus islandicus).